The sequence spans 148 residues: Calmodulin-4 (148 aa).

EF-hand domains follow at residues 8 to 43 (EEVA…LGKN), 44 to 79 (LPEK…YKKG), 80 to 115 (HRAG…LGES), and 116 to 148 (LSQE…HVEN). The Ca(2+) site is built by Asp21, Asn23, Asp25, His27, Glu32, Asp57, Asp59, Asp61, Lys63, Glu68, Asp93, Asn95, Asp97, Tyr99, and Glu104.

In terms of biological role, implicated in the early stage of ectopic ossification. The protein is Calmodulin-4 (Calm4) of Mus musculus (Mouse).